The sequence spans 264 residues: Thymidylate synthase (264 aa).

DUMP is bound at residue Arg-21. Residue His-51 coordinates (6R)-5,10-methylene-5,6,7,8-tetrahydrofolate. Residue 126–127 (RR) coordinates dUMP. Catalysis depends on Cys-146, which acts as the Nucleophile. DUMP is bound by residues 166–169 (RSGD), Asn-177, and 207–209 (HLY). Asp-169 is a binding site for (6R)-5,10-methylene-5,6,7,8-tetrahydrofolate. Ala-263 is a binding site for (6R)-5,10-methylene-5,6,7,8-tetrahydrofolate.

This sequence belongs to the thymidylate synthase family. Bacterial-type ThyA subfamily. Homodimer.

It localises to the cytoplasm. The enzyme catalyses dUMP + (6R)-5,10-methylene-5,6,7,8-tetrahydrofolate = 7,8-dihydrofolate + dTMP. Its pathway is pyrimidine metabolism; dTTP biosynthesis. In terms of biological role, catalyzes the reductive methylation of 2'-deoxyuridine-5'-monophosphate (dUMP) to 2'-deoxythymidine-5'-monophosphate (dTMP) while utilizing 5,10-methylenetetrahydrofolate (mTHF) as the methyl donor and reductant in the reaction, yielding dihydrofolate (DHF) as a by-product. This enzymatic reaction provides an intracellular de novo source of dTMP, an essential precursor for DNA biosynthesis. The polypeptide is Thymidylate synthase (Xanthomonas axonopodis pv. citri (strain 306)).